A 222-amino-acid chain; its full sequence is Cytidylate kinase 2 (222 aa).

7–15 contributes to the ATP binding site; that stretch reads GPSGAGKGT.

Belongs to the cytidylate kinase family. Type 1 subfamily.

It is found in the cytoplasm. It catalyses the reaction CMP + ATP = CDP + ADP. It carries out the reaction dCMP + ATP = dCDP + ADP. In Haemophilus influenzae (strain ATCC 51907 / DSM 11121 / KW20 / Rd), this protein is Cytidylate kinase 2.